The sequence spans 142 residues: Large ribosomal subunit protein uL13 (142 aa).

This sequence belongs to the universal ribosomal protein uL13 family. In terms of assembly, part of the 50S ribosomal subunit.

This protein is one of the early assembly proteins of the 50S ribosomal subunit, although it is not seen to bind rRNA by itself. It is important during the early stages of 50S assembly. This is Large ribosomal subunit protein uL13 from Histophilus somni (Haemophilus somnus).